We begin with the raw amino-acid sequence, 511 residues long: Bifunctional purine biosynthesis protein PurH (511 aa).

The MGS-like domain occupies 1-145 (MKRRALVSVS…KNHQHVTVVV (145 aa)).

Belongs to the PurH family.

It catalyses the reaction (6R)-10-formyltetrahydrofolate + 5-amino-1-(5-phospho-beta-D-ribosyl)imidazole-4-carboxamide = 5-formamido-1-(5-phospho-D-ribosyl)imidazole-4-carboxamide + (6S)-5,6,7,8-tetrahydrofolate. The enzyme catalyses IMP + H2O = 5-formamido-1-(5-phospho-D-ribosyl)imidazole-4-carboxamide. It functions in the pathway purine metabolism; IMP biosynthesis via de novo pathway; 5-formamido-1-(5-phospho-D-ribosyl)imidazole-4-carboxamide from 5-amino-1-(5-phospho-D-ribosyl)imidazole-4-carboxamide (10-formyl THF route): step 1/1. Its pathway is purine metabolism; IMP biosynthesis via de novo pathway; IMP from 5-formamido-1-(5-phospho-D-ribosyl)imidazole-4-carboxamide: step 1/1. The polypeptide is Bifunctional purine biosynthesis protein PurH (Halalkalibacterium halodurans (strain ATCC BAA-125 / DSM 18197 / FERM 7344 / JCM 9153 / C-125) (Bacillus halodurans)).